The primary structure comprises 654 residues: Pentatricopeptide repeat-containing protein At3g16610 (654 aa).

PPR repeat units follow at residues methionine 1–leucine 32, serine 34–proline 64, asparagine 67–proline 101, threonine 102–threonine 136, aspartate 137–alanine 171, tryptophan 172–proline 203, asparagine 204–asparagine 238, aspartate 239–lysine 269, asparagine 270–alanine 304, threonine 307–leucine 341, aspartate 342–lysine 372, aspartate 373–proline 407, aspartate 408–valine 442, asparagine 443–arginine 473, aspartate 474–proline 508, aspartate 509–valine 543, and arginine 546–glutamate 576. The segment at valine 581–valine 654 is type E motif; degenerate.

The protein belongs to the PPR family. PCMP-E subfamily.

The protein is Pentatricopeptide repeat-containing protein At3g16610 (PCMP-E91) of Arabidopsis thaliana (Mouse-ear cress).